The following is a 652-amino-acid chain: Vacuolar fusion protein MON1 homolog A (652 aa).

The tract at residues 102 to 141 (MQRKRSSECLDGTLTPSDGQSMERAESPTPGMAQGMEPGA) is disordered. Serine 128 and serine 153 each carry phosphoserine. Threonine 158 carries the phosphothreonine modification. The disordered stretch occupies residues 158-185 (TESEDGAASGDSHKEGTRGPPPLPTDMR). Serine 188 is subject to Phosphoserine. The interval 211–245 (PGSSEDWLEPPGAVGRPATEPPREGTTEGDEEDAT) is disordered.

It belongs to the MON1/SAND family. In terms of assembly, interacts with CCZ1. Found in a complex with RMC1, CCZ1, MON1A and MON1B. The MON1A-CCZ1B complex interacts with RIMOC1. The MON1A-CCZ1B complex interacts with RAB7A and this interaction is enhanced in the presence of RIMOC1.

Functionally, plays an important role in membrane trafficking through the secretory apparatus. Not involved in endocytic trafficking to lysosomes. Acts in concert with CCZ1, as a guanine exchange factor (GEF) for RAB7, promotes the exchange of GDP to GTP, converting it from an inactive GDP-bound form into an active GTP-bound form. The polypeptide is Vacuolar fusion protein MON1 homolog A (MON1A) (Homo sapiens (Human)).